The primary structure comprises 385 residues: Lipid-A-disaccharide synthase (385 aa).

Belongs to the LpxB family.

It carries out the reaction a lipid X + a UDP-2-N,3-O-bis[(3R)-3-hydroxyacyl]-alpha-D-glucosamine = a lipid A disaccharide + UDP + H(+). It functions in the pathway bacterial outer membrane biogenesis; LPS lipid A biosynthesis. Condensation of UDP-2,3-diacylglucosamine and 2,3-diacylglucosamine-1-phosphate to form lipid A disaccharide, a precursor of lipid A, a phosphorylated glycolipid that anchors the lipopolysaccharide to the outer membrane of the cell. The polypeptide is Lipid-A-disaccharide synthase (Rickettsia canadensis (strain McKiel)).